Here is a 595-residue protein sequence, read N- to C-terminus: Chaperone protein HscA homolog (595 aa).

This sequence belongs to the heat shock protein 70 family.

In terms of biological role, chaperone involved in the maturation of iron-sulfur cluster-containing proteins. Has a low intrinsic ATPase activity which is markedly stimulated by HscB. This chain is Chaperone protein HscA homolog, found in Rickettsia rickettsii (strain Iowa).